A 289-amino-acid chain; its full sequence is Acetylglutamate kinase (289 aa).

Residues 60-61, R82, and N186 contribute to the substrate site; that span reads GG.

It belongs to the acetylglutamate kinase family. ArgB subfamily.

The protein localises to the cytoplasm. It carries out the reaction N-acetyl-L-glutamate + ATP = N-acetyl-L-glutamyl 5-phosphate + ADP. Its pathway is amino-acid biosynthesis; L-arginine biosynthesis; N(2)-acetyl-L-ornithine from L-glutamate: step 2/4. Its function is as follows. Catalyzes the ATP-dependent phosphorylation of N-acetyl-L-glutamate. The chain is Acetylglutamate kinase from Methanoculleus marisnigri (strain ATCC 35101 / DSM 1498 / JR1).